We begin with the raw amino-acid sequence, 567 residues long: Periplasmic [NiFe] hydrogenase large subunit (567 aa).

Glutamate 62 is a binding site for Mg(2+). Ni(2+) is bound by residues cysteine 81 and cysteine 84. Cysteine 84 is a binding site for Fe cation. Mg(2+) is bound at residue leucine 498. Positions 546 and 549 each coordinate Ni(2+). Cysteine 549 contributes to the Fe cation binding site. Histidine 552 is a binding site for Mg(2+). A propeptide spanning residues 553 to 567 (VIDGHTNEVHKFRIL) is cleaved from the precursor.

It belongs to the [NiFe]/[NiFeSe] hydrogenase large subunit family. Heterodimer of a large and a small subunit. Ni(2+) is required as a cofactor. Requires Fe cation as cofactor.

The protein resides in the periplasm. The catalysed reaction is 2 Fe(III)-[cytochrome c3] + H2 = 2 Fe(II)-[cytochrome c3] + 2 H(+). Functionally, catalyzes the reversible oxidoreduction of molecular hydrogen, in conjunction with a specific electron acceptor, cytochrome c3. This Nitratidesulfovibrio vulgaris (strain DSM 19637 / Miyazaki F) (Desulfovibrio vulgaris) protein is Periplasmic [NiFe] hydrogenase large subunit (hydB).